Reading from the N-terminus, the 451-residue chain is Methylenetetrahydrofolate--tRNA-(uracil-5-)-methyltransferase TrmFO (451 aa).

9–14 contributes to the FAD binding site; that stretch reads GGGMAG.

The protein belongs to the MnmG family. TrmFO subfamily. FAD serves as cofactor.

It is found in the cytoplasm. It catalyses the reaction uridine(54) in tRNA + (6R)-5,10-methylene-5,6,7,8-tetrahydrofolate + NADH + H(+) = 5-methyluridine(54) in tRNA + (6S)-5,6,7,8-tetrahydrofolate + NAD(+). The catalysed reaction is uridine(54) in tRNA + (6R)-5,10-methylene-5,6,7,8-tetrahydrofolate + NADPH + H(+) = 5-methyluridine(54) in tRNA + (6S)-5,6,7,8-tetrahydrofolate + NADP(+). Functionally, catalyzes the folate-dependent formation of 5-methyl-uridine at position 54 (M-5-U54) in all tRNAs. This is Methylenetetrahydrofolate--tRNA-(uracil-5-)-methyltransferase TrmFO from Dinoroseobacter shibae (strain DSM 16493 / NCIMB 14021 / DFL 12).